Consider the following 214-residue polypeptide: Large ribosomal subunit protein uL16-like (214 aa).

This sequence belongs to the universal ribosomal protein uL16 family. Component of a male germ cell-specific 60S large ribosomal subunit (LSU), which contains RPL10L and RPL39L, instead of RPL10 and RPL39 paralogs. The composition of the rest of the complex is similar to classical ribosomes. Testis-specific.

The protein resides in the cytoplasm. Functionally, testis-specific component of the ribosome, which is required for the transition from prophase to metaphase in male meiosis I. Compensates for the inactivated X-linked RPL10 paralog during spermatogenesis. The ribosome is a large ribonucleoprotein complex responsible for the synthesis of proteins in the cell. The male germ cell-specific ribosome displays a ribosomal polypeptide exit tunnel of distinct size and charge states compared with the classical ribosome. It is responsible for regulating the biosynthesis and folding of a subset of male germ-cell-specific proteins that are essential for the formation of sperm. This Mus musculus (Mouse) protein is Large ribosomal subunit protein uL16-like.